A 44-amino-acid chain; its full sequence is DNA-directed RNA polymerase subunit Rpo12 (44 aa).

Cysteine 8, cysteine 22, and cysteine 25 together coordinate Zn(2+).

The protein belongs to the archaeal Rpo12/eukaryotic RPC10 RNA polymerase subunit family. As to quaternary structure, part of the RNA polymerase complex. Zn(2+) is required as a cofactor.

The protein localises to the cytoplasm. It catalyses the reaction RNA(n) + a ribonucleoside 5'-triphosphate = RNA(n+1) + diphosphate. In terms of biological role, DNA-dependent RNA polymerase (RNAP) catalyzes the transcription of DNA into RNA using the four ribonucleoside triphosphates as substrates. This Halobacterium salinarum (strain ATCC 29341 / DSM 671 / R1) protein is DNA-directed RNA polymerase subunit Rpo12.